Reading from the N-terminus, the 311-residue chain is UDP-N-acetylenolpyruvoylglucosamine reductase (311 aa).

One can recognise an FAD-binding PCMH-type domain in the interval 29-191; it reads IGGKADIVLK…LSARLKLKPI (163 aa). Residue arginine 172 is part of the active site. Serine 223 (proton donor) is an active-site residue. Residue glutamate 299 is part of the active site.

Belongs to the MurB family. The cofactor is FAD.

It localises to the cytoplasm. It carries out the reaction UDP-N-acetyl-alpha-D-muramate + NADP(+) = UDP-N-acetyl-3-O-(1-carboxyvinyl)-alpha-D-glucosamine + NADPH + H(+). Its pathway is cell wall biogenesis; peptidoglycan biosynthesis. Functionally, cell wall formation. The chain is UDP-N-acetylenolpyruvoylglucosamine reductase from Chloroherpeton thalassium (strain ATCC 35110 / GB-78).